Here is a 141-residue protein sequence, read N- to C-terminus: Galactose-6-phosphate isomerase subunit LacA (141 aa).

It belongs to the LacAB/RpiB family. Heteromultimeric protein consisting of LacA and LacB.

The enzyme catalyses aldehydo-D-galactose 6-phosphate = keto-D-tagatose 6-phosphate. It participates in carbohydrate metabolism; D-galactose 6-phosphate degradation; D-tagatose 6-phosphate from D-galactose 6-phosphate: step 1/1. This Streptococcus pneumoniae serotype 4 (strain ATCC BAA-334 / TIGR4) protein is Galactose-6-phosphate isomerase subunit LacA.